Reading from the N-terminus, the 218-residue chain is Thiopurine S-methyltransferase (218 aa).

Positions 10, 45, 66, and 123 each coordinate S-adenosyl-L-methionine.

Belongs to the class I-like SAM-binding methyltransferase superfamily. TPMT family.

Its subcellular location is the cytoplasm. The catalysed reaction is S-adenosyl-L-methionine + a thiopurine = S-adenosyl-L-homocysteine + a thiopurine S-methylether.. This chain is Thiopurine S-methyltransferase, found in Shewanella sp. (strain MR-7).